The following is a 341-amino-acid chain: Glycerol-3-phosphate dehydrogenase [NAD(P)+] (341 aa).

NADPH is bound by residues Ser17, Trp18, Arg37, and Lys112. Sn-glycerol 3-phosphate-binding residues include Lys112 and Gly140. Ala144 contacts NADPH. Sn-glycerol 3-phosphate is bound by residues Lys195, Asp248, Ser258, Arg259, and Asn260. Catalysis depends on Lys195, which acts as the Proton acceptor. Residue Arg259 participates in NADPH binding. Residues Val283 and Glu285 each coordinate NADPH.

Belongs to the NAD-dependent glycerol-3-phosphate dehydrogenase family.

The protein localises to the cytoplasm. It catalyses the reaction sn-glycerol 3-phosphate + NAD(+) = dihydroxyacetone phosphate + NADH + H(+). The catalysed reaction is sn-glycerol 3-phosphate + NADP(+) = dihydroxyacetone phosphate + NADPH + H(+). It functions in the pathway membrane lipid metabolism; glycerophospholipid metabolism. Functionally, catalyzes the reduction of the glycolytic intermediate dihydroxyacetone phosphate (DHAP) to sn-glycerol 3-phosphate (G3P), the key precursor for phospholipid synthesis. This Mycobacterium avium (strain 104) protein is Glycerol-3-phosphate dehydrogenase [NAD(P)+].